The following is a 159-amino-acid chain: Phosphopantetheine adenylyltransferase (159 aa).

Thr9 is a binding site for substrate. ATP-binding positions include 9–10 (TF) and His17. The substrate site is built by Lys41, Leu73, and Arg87. Residues 88–90 (GLR), Glu98, and 123–129 (YSFISST) contribute to the ATP site.

This sequence belongs to the bacterial CoaD family. As to quaternary structure, homohexamer. Mg(2+) serves as cofactor.

It is found in the cytoplasm. It catalyses the reaction (R)-4'-phosphopantetheine + ATP + H(+) = 3'-dephospho-CoA + diphosphate. It participates in cofactor biosynthesis; coenzyme A biosynthesis; CoA from (R)-pantothenate: step 4/5. Reversibly transfers an adenylyl group from ATP to 4'-phosphopantetheine, yielding dephospho-CoA (dPCoA) and pyrophosphate. The polypeptide is Phosphopantetheine adenylyltransferase (Pseudomonas putida (strain ATCC 700007 / DSM 6899 / JCM 31910 / BCRC 17059 / LMG 24140 / F1)).